The chain runs to 472 residues: Homeobox protein PKNOX2 (472 aa).

The tract at residues 1–62 is disordered; sequence MMQHASPAPA…STPVPSAPID (62 aa). Residues 26–38 are compositionally biased toward polar residues; it reads DSPQMTATAQPPS. The segment covering 46–56 has biased composition (low complexity); the sequence is SAPSAAASTPV. Residues 96 to 179 form the MEIS N-terminal domain; the sequence is GSECITSASF…MHSDNLLRND (84 aa). The homeobox DNA-binding region spans 291 to 350; that stretch reads KRGVLPKHATNIMRSWLFQHLMHPYPTEDEKRQIAAQTNLTLLQVNNWFINARRRILQPM. 3 disordered regions span residues 351 to 371, 386 to 405, and 422 to 472; these read LDASNPDPAPKAKKIKSQHRP, QQQGGAPGTNPDGSINLDNL, and MAAH…DSLE. Over residues 361–371 the composition is skewed to basic residues; sequence KAKKIKSQHRP. Over residues 429 to 454 the composition is skewed to acidic residues; that stretch reads LDGTEEEDEDEMEEEEEEELEEEVDE.

This sequence belongs to the TALE/MEIS homeobox family.

It is found in the nucleus. The chain is Homeobox protein PKNOX2 (PKNOX2) from Homo sapiens (Human).